Reading from the N-terminus, the 302-residue chain is Recombination-associated protein RdgC (302 aa).

This sequence belongs to the RdgC family.

The protein resides in the cytoplasm. It localises to the nucleoid. In terms of biological role, may be involved in recombination. The chain is Recombination-associated protein RdgC from Xanthomonas campestris pv. campestris (strain 8004).